The chain runs to 712 residues: Glycine--tRNA ligase beta subunit (712 aa).

This sequence belongs to the class-II aminoacyl-tRNA synthetase family. Tetramer of two alpha and two beta subunits.

The protein resides in the cytoplasm. It carries out the reaction tRNA(Gly) + glycine + ATP = glycyl-tRNA(Gly) + AMP + diphosphate. The sequence is that of Glycine--tRNA ligase beta subunit from Dechloromonas aromatica (strain RCB).